The chain runs to 73 residues: MSTETASGPTEDQVEILEYNFNKVNKHPDPTTLCLIAAEAGLSEEETQKWFKQRLAQWRRSEGLPSECRSVTD.

The homeobox; degenerate DNA-binding region spans 3 to 62 (TETASGPTEDQVEILEYNFNKVNKHPDPTTLCLIAAEAGLSEEETQKWFKQRLAQWRRSE).

As to quaternary structure, interacts with serum response factor (SRF). Component of a large complex containing histone deacetylases such as HDAC2. Interacts with the acetylated forms of HSPA1A and HSPA1B. Interacts with HSPA8.

It is found in the nucleus. It localises to the cytoplasm. Atypical homeodomain protein which does not bind DNA and is required to modulate cardiac growth and development. Acts via its interaction with SRF, thereby modulating the expression of SRF-dependent cardiac-specific genes and cardiac development. Prevents SRF-dependent transcription either by inhibiting SRF binding to DNA or by recruiting histone deacetylase (HDAC) proteins that prevent transcription by SRF. Overexpression causes cardiac hypertrophy. Acts as a co-chaperone for HSPA1A and HSPA1B chaperone proteins and assists in chaperone-mediated protein refolding. The protein is Homeodomain-only protein (HOPX) of Bos taurus (Bovine).